A 310-amino-acid polypeptide reads, in one-letter code: MSPTVQCGAVSQVVVVGGTHGNEMSGVCLAKHWLQDPSELHRKSFTAEVLLANPIAVERCVRYIDRDLNRSFSHELLSASGSESDSYEAKRAREIYQKYGPKQSSLNFVIDLHNTTSNMGTTFLLFKGDNFALHLANYLQTKCVDPSFPCHILLIDIPEGGHVHLQSMGKHSVSLELGPQPQGVARADVLTRMRALVNCSLDFLDLFNQGTEFPSFETDVHQVLYRADFPRNEDGEIEAVIHSELQDKDYLPLKPGDPIFQRLNGEDILYNGEKQIYPVFINEAAYYEKKVAFIATEKTHCLVPALKVQN.

Residues histidine 20 and glutamate 23 each coordinate Zn(2+). Residues arginine 62 and 69–70 (NR) contribute to the substrate site. Position 113 (histidine 113) interacts with Zn(2+). Substrate contacts are provided by glutamate 176 and tyrosine 286.

The protein belongs to the AspA/AstE family. Aspartoacylase subfamily. Homotetramer. The cofactor is Zn(2+).

It localises to the apical cell membrane. The protein resides in the cytoplasm. It carries out the reaction an N-acyl-aromatic L-alpha-amino acid + H2O = an aromatic L-alpha-amino acid + a carboxylate. The catalysed reaction is an N-acetyl-L-cysteine-S-conjugate + H2O = an S-substituted L-cysteine + acetate. Plays an important role in deacetylating mercapturic acids in kidney proximal tubules. In Xenopus tropicalis (Western clawed frog), this protein is N-acyl-aromatic-L-amino acid amidohydrolase (carboxylate-forming) (acy3).